A 192-amino-acid polypeptide reads, in one-letter code: uncharacterized protein (192 aa).

In terms of domain architecture, Nudix hydrolase spans His29–Ser160. The Nudix box motif lies at Gly67 to Ala89. The Mg(2+) site is built by Glu83 and Glu87.

Belongs to the Nudix hydrolase family. PCD1 subfamily. Mn(2+) serves as cofactor. Mg(2+) is required as a cofactor.

In terms of biological role, probably mediates the hydrolysis of some nucleoside diphosphate derivatives. This is an uncharacterized protein from Escherichia coli O7:K1 (strain IAI39 / ExPEC).